A 512-amino-acid chain; its full sequence is 2,3-bisphosphoglycerate-independent phosphoglycerate mutase (512 aa).

Positions 12 and 62 each coordinate Mn(2+). The active-site Phosphoserine intermediate is Ser-62. Substrate-binding positions include His-123, 153-154 (RD), Arg-185, Arg-191, 260-263 (RPDR), and Lys-333. 5 residues coordinate Mn(2+): Asp-400, His-404, Asp-441, His-442, and His-460.

Belongs to the BPG-independent phosphoglycerate mutase family. As to quaternary structure, monomer. Mn(2+) serves as cofactor.

The catalysed reaction is (2R)-2-phosphoglycerate = (2R)-3-phosphoglycerate. It participates in carbohydrate degradation; glycolysis; pyruvate from D-glyceraldehyde 3-phosphate: step 3/5. Functionally, catalyzes the interconversion of 2-phosphoglycerate and 3-phosphoglycerate. This Clostridium beijerinckii (strain ATCC 51743 / NCIMB 8052) (Clostridium acetobutylicum) protein is 2,3-bisphosphoglycerate-independent phosphoglycerate mutase.